The primary structure comprises 678 residues: MAANVGSMSQYWKRFDLQQLQRELDAAATVLANRQDESEQSRKRLIEQSREFKKNTPEDLRKQVAPLLKSFQGEIDALSKRSKEAEAAFLTVYKRLIDVPDPVPALDVGQQLEIKVQRLHDIETENQKLRETLEEYNKEFAEVKNQEVTIKALKEKIREYEQTLKSQAETIALEKEQKLQNDFAEKERKLQETQMSTTSKLEEAEHKLQTLQTALEKTRTELFDLKTKYDEETTAKADEIEMIMTDLERANQRAEVAQREAETLREQLSSANHSLQLASQIQKAPDVEQAIEVLTRSSLEVELAAKEREIAQLVEDVQRLQASLTKLRENSASQISQLEQQLNAKNSTLKQLEEKLKGQADYEEVKKELNTLKSMEFAPSEGAGTQDSTKPLEVLLLEKNRSLQSENATLRISNSDLSGRCAELQIHLTEATAKAVEQKELIARLEQDLSTIQSIQRPDAEGASEQGLEKIPEPIKEATALFYGPSMSSSGTLPEGQVDSLLSIISSQRERFRTRNQELEAESRMAQHTIQALQSELDSLRADNIKLFEKIKFLQSYPGRGIGSDDTELRYSSQYEERLDPFSSFSKRERQRKYLGLSPWDKATLGMGRLILSNKTARTIGFFYTLFLHCLVFLVLYKLAWSESVERDCAATCAKKFADHLHKFHESDNGAAAGDLWQ.

Topologically, residues 1 to 619 (MAANVGSMSQ…LILSNKTART (619 aa)) are cytoplasmic. Coiled-coil stretches lie at residues 16–40 (DLQQ…ESEQ), 67–374 (LLKS…TLKS), 427–454 (HLTE…TIQS), and 502–556 (LSII…FLQS). S586 bears the Phosphoserine mark. A helical; Anchor for type IV membrane protein transmembrane segment spans residues 620-640 (IGFFYTLFLHCLVFLVLYKLA). Topologically, residues 641 to 678 (WSESVERDCAATCAKKFADHLHKFHESDNGAAAGDLWQ) are lumenal.

This sequence belongs to the CASP family. As to quaternary structure, homodimer; disulfide-linked. Interacts with GOLGA5. In terms of tissue distribution, ubiquitously expressed.

It localises to the golgi apparatus membrane. Its function is as follows. May be involved in intra-Golgi retrograde transport. This chain is Protein CASP (Cux1), found in Mus musculus (Mouse).